A 149-amino-acid chain; its full sequence is Protein FAM72B (149 aa).

It belongs to the FAM72 family.

This Homo sapiens (Human) protein is Protein FAM72B (FAM72B).